The chain runs to 123 residues: F-box protein PP2-B3 (123 aa).

The 47-residue stretch at 10 to 56 (PSPFDGLPENCISNIISFTTPRDACFAASVSKAFESAVQSDSVWEKF) folds into the F-box domain.

The protein is F-box protein PP2-B3 (PP2B3) of Arabidopsis thaliana (Mouse-ear cress).